Reading from the N-terminus, the 166-residue chain is Telethonin (166 aa).

Phosphoserine is present on serine 39. Residues valine 145–glycine 166 are disordered. A compositionally biased stretch (polar residues) spans serine 156 to glycine 166.

In terms of assembly, interacts with MYOZ1, MYOZ2 and MYOZ3. Interacts with CSRP3. Interacts directly with the N-terminal Ig-like domains of 2 titin (TTN) molecules. Interacts with ANKRD2; the interaction is direct.

It is found in the cytoplasm. It localises to the myofibril. The protein localises to the sarcomere. Its function is as follows. Muscle assembly regulating factor. Mediates the antiparallel assembly of titin (TTN) molecules at the sarcomeric Z-disk. This chain is Telethonin (TCAP), found in Bos taurus (Bovine).